The following is a 416-amino-acid chain: Phosphoglycerate kinase (416 aa).

(2R)-3-phosphoglycerate-binding residues include V23, D24, F25, N26, Q38, R39, S62, H63, G65, R66, L121, R122, H168, and R169. G212 provides a ligand contact to ADP. CDP is bound at residue G212. AMP is bound by residues A213 and K214. A213 serves as a coordination point for ATP. A213 provides a ligand contact to Mg(2+). D217 is a CDP binding site. D217 lines the Mg(2+) pocket. Residue K218 coordinates AMP. K218 contacts ATP. G236 provides a ligand contact to ADP. G236 lines the CDP pocket. The AMP site is built by G237 and G311. ATP contacts are provided by G237 and G311. CDP contacts are provided by G336 and F341. F341 is a binding site for ADP. E342 provides a ligand contact to AMP. 3 residues coordinate ATP: E342, D373, and T374. Residue D373 participates in Mg(2+) binding.

It belongs to the phosphoglycerate kinase family. In terms of assembly, monomer. Mg(2+) serves as cofactor.

It localises to the cytoplasm. The protein resides in the mitochondrion. The catalysed reaction is (2R)-3-phosphoglycerate + ATP = (2R)-3-phospho-glyceroyl phosphate + ADP. The protein operates within carbohydrate degradation; glycolysis; pyruvate from D-glyceraldehyde 3-phosphate: step 2/5. Catalyzes one of the two ATP producing reactions in the glycolytic pathway via the reversible conversion of 1,3-diphosphoglycerate to 3-phosphoglycerate. Both L- and D- forms of purine and pyrimidine nucleotides can be used as substrates, but the activity is much lower on pyrimidines. Negatively regulates the biosynthesis of acetyl-CoA from pyruvate in the mitochondrion. In Komagataella pastoris (Yeast), this protein is Phosphoglycerate kinase (PGK1).